The sequence spans 474 residues: 6-phospho-beta-glucosidase AscB (474 aa).

The active-site Proton donor is the Glu-180. Residue Glu-372 is the Nucleophile of the active site.

It belongs to the glycosyl hydrolase 1 family.

It carries out the reaction 6-phospho-beta-D-glucosyl-(1-&gt;4)-D-glucose + H2O = D-glucose 6-phosphate + D-glucose. Can hydrolyze salicin, cellobiose, and probably arbutin. This chain is 6-phospho-beta-glucosidase AscB (ascB), found in Escherichia coli (strain K12).